A 108-amino-acid polypeptide reads, in one-letter code: Beta-defensin 126 (108 aa).

A signal peptide spans 1–20; the sequence is MKSLLFTLAVFMLLAQLVSG. Positions 21–63 are in vitro binds to LPS, mediates antimicrobial activity and inhibits LPS-mediated inflammation; it reads NWYVKKCLNDVGICKKKCKPGEMHIKNGWATCGKQRDCCVPAD. Cystine bridges form between C27-C58, C34-C52, and C38-C59.

It belongs to the beta-defensin family. In terms of assembly, homodimer or homooligomer; disulfide-linked. In terms of processing, O-glycosylated; glycans contain alpha(2,3)-linked sialic acids.

It is found in the secreted. Its function is as follows. Highly glycosylated atypical beta-defensin involved in several aspects of sperm function. Facilitates sperm transport in the female reproductive tract and contributes to sperm protection against immunodetection; both functions are probably implicating the negative surface charge provided by its O-linked oligosaccharides in the sperm glycocalyx. Involved in binding of sperm to oviductal epithelial cells to form a sperm reservoir until ovulation. Release from the sperm surface during capacitation and ovaluation by an elevation of oviductal fluid pH is unmasking other surface components and allows sperm to penetrate the cumulus matrix and bind to the zona pellucida of the oocyte. In vitro has antimicrobial activity and may inhibit LPS-mediated inflammation. The sequence is that of Beta-defensin 126 (DEFB126) from Pan troglodytes (Chimpanzee).